A 710-amino-acid chain; its full sequence is Conserved oligomeric Golgi complex subunit 2 (710 aa).

The protein belongs to the COG2 family. As to quaternary structure, component of the conserved oligomeric Golgi complex which is composed of eight different subunits and is required for normal Golgi morphology and localization.

It localises to the golgi apparatus membrane. In terms of biological role, required for normal Golgi morphology and function. The chain is Conserved oligomeric Golgi complex subunit 2 from Drosophila melanogaster (Fruit fly).